A 343-amino-acid chain; its full sequence is Heat-inducible transcription repressor HrcA (343 aa).

The protein belongs to the HrcA family.

Its function is as follows. Negative regulator of class I heat shock genes (grpE-dnaK-dnaJ and groELS operons). Prevents heat-shock induction of these operons. The sequence is that of Heat-inducible transcription repressor HrcA from Clostridium botulinum (strain Alaska E43 / Type E3).